We begin with the raw amino-acid sequence, 500 residues long: NAD(P)H-quinone oxidoreductase chain 4, chloroplastic (500 aa).

13 helical membrane-spanning segments follow: residues 4–24 (FPWL…MLFL), 35–55 (YTIS…CYNF), 87–107 (IGTI…AFPV), 134–154 (LLLF…LLSM), 167–187 (FILY…GISL), 211–231 (ILFY…IPLH), 242–262 (HYST…YGLV), 272–292 (AHSM…IYAA), 305–325 (IAYS…SITD), 330–350 (GAIL…FLAG), 386–406 (LALP…GIIT), 416–436 (IFII…LLSM), and 462–482 (LFLS…PDFV).

It belongs to the complex I subunit 4 family.

The protein resides in the plastid. Its subcellular location is the chloroplast thylakoid membrane. The enzyme catalyses a plastoquinone + NADH + (n+1) H(+)(in) = a plastoquinol + NAD(+) + n H(+)(out). It catalyses the reaction a plastoquinone + NADPH + (n+1) H(+)(in) = a plastoquinol + NADP(+) + n H(+)(out). In Crucihimalaya wallichii (Rock-cress), this protein is NAD(P)H-quinone oxidoreductase chain 4, chloroplastic.